The sequence spans 464 residues: MDFQHRPGGKTGSGGVASSSESNRDRRERLRQLALETIDINKDPYFMKNHLGSYECKLCLTLHNNEGSYLAHTQGKKHQTNLARRAAKEAKEAPAQPAPEKVKVEVKKFVKIGRPGYKVTKQRDSEMGQQSLLFQIDYPEIAEGIMPRHRFMSAYEQRIEPPDRRWQYLLMAAEPYETIAFKVPSREIDKAEGKFWTHWNRETKQFFLQFHFKMEKPPAPPSLPAGPPGVKRPPPPLMNGLPPRPPLPESLPPPPPGGLPLPPMPPTGPAPSGPPGPPQLPPPAPGVHPPAPVVHPPASGVHPPAPGVHPPAPGVHPPAPGVHPPTSGVHPPAPGVHPPAPGVHPPAPGVHPPAPGVHPPAPGVHPPPSAGVHPQAPGVHPAAPAVHPQAPGVHPPAPGMHPQAPGVHPQPPGVHPSAPGVHPQPPGVHPSNPGVHPPTPMPPMLRPPLPSEGPGNIPPPPPTN.

M1 bears the N-acetylmethionine mark. The disordered stretch occupies residues 1–27 (MDFQHRPGGKTGSGGVASSSESNRDRR). K10 is subject to N6-acetyllysine. The segment at 54-84 (YECKLCLTLHNNEGSYLAHTQGKKHQTNLAR) adopts a Matrin-type zinc-finger fold. S153 bears the Phosphoserine mark. 3 stretches are compositionally biased toward pro residues: residues 217–295 (PPAP…PVVH), 303–323 (PPAP…PGVH), and 331–369 (PPAP…PPPS). The segment at 217-464 (PPAPPSLPAG…GNIPPPPPTN (248 aa)) is disordered. Over residues 370–392 (AGVHPQAPGVHPAAPAVHPQAPG) the composition is skewed to low complexity. Residues 435–464 (VHPPTPMPPMLRPPLPSEGPGNIPPPPPTN) are compositionally biased toward pro residues.

It belongs to the SF3A2 family. Component of the 17S U2 SnRNP complex, a ribonucleoprotein complex that contains small nuclear RNA (snRNA) U2 and a number of specific proteins. Part of the SF3A subcomplex of the 17S U2 SnRNP complex which is composed of three subunits; SF3A3/SAP61, SF3A2/SAP62 and SF3A1/SAP114. SF3A associates with the splicing factor SF3B and a 12S RNA unit to form the mature 17S U2 small nuclear ribonucleoprotein complex (17S U2 snRNP). Identified in the spliceosome 'E' complex, a precursor of the spliceosome 'A' complex. Identified in the spliceosome 'A' and 'B' complexes. Identified in the spliceosome 'C' complex. Interacts with HTATSF1.

Its subcellular location is the nucleus. Its function is as follows. Component of the 17S U2 SnRNP complex of the spliceosome, a large ribonucleoprotein complex that removes introns from transcribed pre-mRNAs. The 17S U2 SnRNP complex (1) directly participates in early spliceosome assembly and (2) mediates recognition of the intron branch site during pre-mRNA splicing by promoting the selection of the pre-mRNA branch-site adenosine, the nucleophile for the first step of splicing. Within the 17S U2 SnRNP complex, SF3A2 is part of the SF3A subcomplex that contributes to the assembly of the 17S U2 snRNP, and the subsequent assembly of the pre-spliceosome 'E' complex and the pre-catalytic spliceosome 'A' complex. Involved in pre-mRNA splicing as a component of pre-catalytic spliceosome 'B' complexes, including the Bact complex. Interacts directly with the duplex formed by U2 snRNA and the intron. The sequence is that of Splicing factor 3A subunit 2 (SF3A2) from Homo sapiens (Human).